We begin with the raw amino-acid sequence, 307 residues long: Shikimate kinase 2, chloroplastic (307 aa).

Residues 1–60 (MEARAGLAMQSRAAVGVGAGPGVGRRGRAVIRVGKRPTAASLRVGGPAGPAAAKPLAPLY) constitute a chloroplast transit peptide. 101–108 (GMMGSGKS) contributes to the ATP binding site. Ser-108 contacts Mg(2+). 3 residues coordinate substrate: Asp-126, Arg-151, and Gly-173. Position 212 (Arg-212) interacts with ATP. The interval 285–307 (HSTSSGPVGDLIVDSQNRRTKAL) is disordered.

This sequence belongs to the shikimate kinase family. Mg(2+) is required as a cofactor. As to expression, expressed in panicles.

Its subcellular location is the plastid. The protein resides in the chloroplast. It catalyses the reaction shikimate + ATP = 3-phosphoshikimate + ADP + H(+). Its pathway is metabolic intermediate biosynthesis; chorismate biosynthesis; chorismate from D-erythrose 4-phosphate and phosphoenolpyruvate: step 5/7. Catalyzes the specific phosphorylation of the 3-hydroxyl group of shikimic acid using ATP as a cosubstrate. This chain is Shikimate kinase 2, chloroplastic (SK2), found in Oryza sativa subsp. japonica (Rice).